Here is a 78-residue protein sequence, read N- to C-terminus: Small ribosomal subunit protein bS16c (78 aa).

It belongs to the bacterial ribosomal protein bS16 family.

Its subcellular location is the plastid. The protein localises to the chloroplast. In Gracilaria tenuistipitata var. liui (Red alga), this protein is Small ribosomal subunit protein bS16c.